The primary structure comprises 192 residues: Elongation factor P (192 aa).

This sequence belongs to the elongation factor P family.

The protein localises to the cytoplasm. It functions in the pathway protein biosynthesis; polypeptide chain elongation. Involved in peptide bond synthesis. Stimulates efficient translation and peptide-bond synthesis on native or reconstituted 70S ribosomes in vitro. Probably functions indirectly by altering the affinity of the ribosome for aminoacyl-tRNA, thus increasing their reactivity as acceptors for peptidyl transferase. This Borrelia turicatae (strain 91E135) protein is Elongation factor P.